The following is a 610-amino-acid chain: 6(G)-fructosyltransferase (610 aa).

The Cytoplasmic portion of the chain corresponds to 1–20; sequence MATSLQAPILGSRPPRRTLR. Residues 21 to 38 traverse the membrane as a helical; Signal-anchor for type II membrane protein segment; the sequence is FLSFALFSALVLVVASFS. Residues 39-610 lie on the Vacuolar side of the membrane; sequence SRKSESGSGL…NQYYPFTSSN (572 aa). Residues 79 to 82, Q98, W106, 141 to 142, and 207 to 208 each bind substrate; these read YMND, WT, and RD. D82 is an active-site residue. N-linked (GlcNAc...) asparagine glycans are attached at residues N215, N229, and N248. Residue E266 coordinates substrate. Residue N459 is glycosylated (N-linked (GlcNAc...) asparagine). An intrachain disulfide couples C460 to C508. 2 N-linked (GlcNAc...) asparagine glycosylation sites follow: N580 and N597.

The protein belongs to the glycosyl hydrolase 32 family. In terms of processing, might be processed in two N-terminal and C-terminal proteolytic fragments.

It is found in the vacuole membrane. The enzyme catalyses [1-beta-D-fructofuranosyl-(2-&gt;1)-]m+1 alpha-D-glucopyranoside + [1-beta-D-fructofuranosyl-(2-&gt;1)-]n+1 alpha-D-glucopyranoside = [1-beta-D-fructofuranosyl-(2-&gt;1)-]m alpha-D-glucopyranoside + [1-beta-D-fructofuranosyl-(2-&gt;1)-]n+1 beta-D-fructofuranosyl-(2-&gt;6)-alpha-D-glucopyranoside (m &gt; 0, n &gt;= 0).. Its function is as follows. Involved in the synthesis of fructan of the inulin neoseries. Has no 1-FFT activity. The sequence is that of 6(G)-fructosyltransferase (FT1) from Asparagus officinalis (Garden asparagus).